Reading from the N-terminus, the 239-residue chain is Ribonuclease 3 (239 aa).

One can recognise an RNase III domain in the interval 18 to 141; that stretch reads YLTLEKALGY…LMAGVYLEAG (124 aa). Mg(2+) is bound at residue glutamate 54. Aspartate 58 is a catalytic residue. Positions 127 and 130 each coordinate Mg(2+). Glutamate 130 is a catalytic residue. Residues 168–237 enclose the DRBM domain; it reads DYKTALQELT…AYQALQKLKE (70 aa).

It belongs to the ribonuclease III family. Homodimer. Mg(2+) serves as cofactor.

It localises to the cytoplasm. It catalyses the reaction Endonucleolytic cleavage to 5'-phosphomonoester.. In terms of biological role, digests double-stranded RNA. Involved in the processing of primary rRNA transcript to yield the immediate precursors to the large and small rRNAs (23S and 16S). Processes some mRNAs, and tRNAs when they are encoded in the rRNA operon. Processes pre-crRNA and tracrRNA of type II CRISPR loci if present in the organism. The protein is Ribonuclease 3 of Helicobacter pylori (strain P12).